A 127-amino-acid chain; its full sequence is UPF0325 protein VIBHAR_03240 (127 aa).

It belongs to the UPF0325 family.

This Vibrio campbellii (strain ATCC BAA-1116) protein is UPF0325 protein VIBHAR_03240.